The sequence spans 605 residues: F-box/WD repeat-containing protein 1A (605 aa).

Residues 128–177 (ASYEKEKELCVKYFEQWSESDQVEFVEHLISQMCHYQHGHINSYLKPMLQ) are homodimerization domain D. In terms of domain architecture, F-box spans 190-228 (DHIAENILSYLDAKSLCAAELVCKEWYRVTSDGMLWKKL). The tract at residues 190-228 (DHIAENILSYLDAKSLCAAELVCKEWYRVTSDGMLWKKL) is required for down-regulation of SNAI1. 7 WD repeats span residues 301 to 338 (ETSK…CKRI), 341 to 378 (GHTG…MLNT), 381 to 418 (HHCE…DITL), 424 to 461 (GHRA…FVRT), 464 to 503 (GHKR…RVLE), 505 to 541 (HEEL…DPRA), and 553 to 590 (EHSG…AAQA).

As to quaternary structure, homodimer. Self-associates. Component of the SCF(BTRC) complex formed of CUL1, SKP1, RBX1 and a BTRC dimer. Direct interaction with SKP1 occurs via the F-box domain. Interacts with phosphorylated ubiquitination substrates SMAD3 and SMAD4. Interacts with phosphorylated ubiquitination substrates CTNNB1, NFKBIA, NFKBIB, NFKBIE, NFKB1/nuclear factor NF-kappa-B p105 subunit, ATF4, CDC25A, DLG1, FBXO5 and SNAI1; the interaction requires the phosphorylation of the 2 serine residues in the substrate destruction motif D-S-G-X(2,3,4)-S. Binds UBQLN1. Interacts with CDC34 and UBE2R2. Interacts with FBXW11. Interacts with CUL4A and DDB1. Part of a SCF(BTRC)-like complex lacking CUL1, which is associated with phosphorylated NKBIA and RELA; RELA interacts directly with NFKBIA. Interacts with the phosphorylated form of GLI3. Interacts with CLU. Interacts with PER1 (phosphorylated), PER2 (phosphorylated) and PER3. Interacts with phosphorylated ubiquitination substrate CEP68. Interacts with ZC3H12A; this interaction occurs when ZC3H12A is phosphorylated in a IKBKB/IKKB-dependent manner. Interacts with HSF1; this interaction occurs during mitosis and induces HSF1 ubiquitin-dependent degradation, a process inhibited by CDC20. Interacts with NFE2L1. Interacts with INAVA. Interacts with IL10RA; this interaction leads to IL10RA ubiquitination and subsequent degradation. Interacts with REST. Interacts with KLF4; this interaction leads to KLF4 ubiquitination and subsequent degradation. Interacts with UBR2, as part of a SCF(BTRC) complex; the interaction mediates 'Lys-48'-linked ubiquitination of UBR2 and is regulated by DUSP22 in the T-cell receptor signaling pathway. (Microbial infection) Interacts with vaccinia virus A49; this interaction inhibits NF-kappa-B activation. In terms of assembly, (Microbial infection) Interacts with HIV-1 Vpu. Post-translationally, ubiquitinated. Deubiquitinated by OTUD5, promoting its stability. As to expression, expressed in epididymis (at protein level).

It localises to the cytoplasm. Its subcellular location is the nucleus. It functions in the pathway protein modification; protein ubiquitination. Its function is as follows. Substrate recognition component of a SCF (SKP1-CUL1-F-box protein) E3 ubiquitin-protein ligase complex which mediates the ubiquitination and subsequent proteasomal degradation of target proteins. Recognizes and binds to phosphorylated target proteins. SCF(BTRC) mediates the ubiquitination of CTNNB1 and participates in Wnt signaling. SCF(BTRC) mediates the ubiquitination of phosphorylated NFKB1, ATF4, CDC25A, DLG1, FBXO5, PER1, SMAD3, SMAD4, SNAI1 and probably NFKB2. SCF(BTRC) mediates the ubiquitination of NFKBIA, NFKBIB and NFKBIE; the degradation frees the associated NFKB1 to translocate into the nucleus and to activate transcription. Ubiquitination of NFKBIA occurs at 'Lys-21' and 'Lys-22'. The SCF(FBXW11) complex also regulates NF-kappa-B by mediating ubiquitination of phosphorylated NFKB1: specifically ubiquitinates the p105 form of NFKB1, leading to its degradation. SCF(BTRC) mediates the ubiquitination of CEP68; this is required for centriole separation during mitosis. SCF(BTRC) mediates the ubiquitination and subsequent degradation of nuclear NFE2L1. Has an essential role in the control of the clock-dependent transcription via degradation of phosphorylated PER1 and PER2. May be involved in ubiquitination and subsequent proteasomal degradation through a DBB1-CUL4 E3 ubiquitin-protein ligase. Required for activation of NFKB-mediated transcription by IL1B, MAP3K14, MAP3K1, IKBKB and TNF. Required for proteolytic processing of GLI3. Mediates ubiquitination of REST, thereby leading to its proteasomal degradation. SCF(BTRC) mediates the ubiquitination and subsequent proteasomal degradation of KLF4; thereby negatively regulating cell pluripotency maintenance and embryogenesis. SCF(BTRC) acts as a regulator of mTORC1 signaling pathway by catalyzing ubiquitination and subsequent proteasomal degradation of phosphorylated DEPTOR, TFE3 and MITF. SCF(BTRC) directs 'Lys-48'-linked ubiquitination of UBR2 in the T-cell receptor signaling pathway. This chain is F-box/WD repeat-containing protein 1A (BTRC), found in Homo sapiens (Human).